The chain runs to 701 residues: DC-STAMP domain-containing protein 2 (701 aa).

4 helical membrane passes run 15 to 35, 40 to 60, 82 to 102, and 215 to 235; these read TCGFTVGLSLATAFGLLELLG, PFGCLVTTVTLAAFLSLGMGF, LLLLVASFGLVLQGPCANTLQ, and FPHLCYALLPYKLLVCGLASL. 2 N-linked (GlcNAc...) asparagine glycosylation sites follow: Asn272 and Asn284. Transmembrane regions (helical) follow at residues 310-330 and 404-424; these read ALSLMGYTMPLLIGFLYIQAL and LLIMLLLVFLDYGVFWLLDLA. A glycan (N-linked (GlcNAc...) asparagine) is linked at Asn468. The helical transmembrane segment at 488–508 threads the bilayer; that stretch reads YIVIGTMYGLCFFVTLFGSYV. The interval 673–701 is disordered; that stretch reads LQEALGTNLSDKSTSKPERAGNRNQDRKQ. Basic and acidic residues predominate over residues 685 to 701; sequence STSKPERAGNRNQDRKQ.

As to quaternary structure, interacts with DCST1. In terms of tissue distribution, expressed in testis.

It is found in the cytoplasmic vesicle. It localises to the secretory vesicle. Its subcellular location is the acrosome membrane. Essential sperm cell-surface protein required for sperm-egg fusion and fertilization. The protein is DC-STAMP domain-containing protein 2 of Mus musculus (Mouse).